We begin with the raw amino-acid sequence, 514 residues long: Lysine--tRNA ligase (514 aa).

Mg(2+) contacts are provided by Glu-424 and Glu-431.

The protein belongs to the class-II aminoacyl-tRNA synthetase family. Homodimer. Mg(2+) serves as cofactor.

The protein resides in the cytoplasm. It carries out the reaction tRNA(Lys) + L-lysine + ATP = L-lysyl-tRNA(Lys) + AMP + diphosphate. In Cupriavidus necator (strain ATCC 17699 / DSM 428 / KCTC 22496 / NCIMB 10442 / H16 / Stanier 337) (Ralstonia eutropha), this protein is Lysine--tRNA ligase.